The sequence spans 32 residues: uncharacterized protein (32 aa).

This is an uncharacterized protein from Treponema pallidum (strain Nichols).